A 245-amino-acid polypeptide reads, in one-letter code: Probable phosphatase PMI1003 (245 aa).

Residues His-7, His-9, His-15, His-40, Glu-73, His-101, His-131, Asp-192, and His-194 each contribute to the Zn(2+) site.

This sequence belongs to the PHP family. In terms of assembly, homotrimer. Zn(2+) serves as cofactor.

This is Probable phosphatase PMI1003 from Proteus mirabilis (strain HI4320).